The primary structure comprises 176 residues: Large ribosomal subunit protein uL10 (176 aa).

This sequence belongs to the universal ribosomal protein uL10 family. In terms of assembly, part of the ribosomal stalk of the 50S ribosomal subunit. The N-terminus interacts with L11 and the large rRNA to form the base of the stalk. The C-terminus forms an elongated spine to which L12 dimers bind in a sequential fashion forming a multimeric L10(L12)X complex.

In terms of biological role, forms part of the ribosomal stalk, playing a central role in the interaction of the ribosome with GTP-bound translation factors. The polypeptide is Large ribosomal subunit protein uL10 (Streptomyces avermitilis (strain ATCC 31267 / DSM 46492 / JCM 5070 / NBRC 14893 / NCIMB 12804 / NRRL 8165 / MA-4680)).